We begin with the raw amino-acid sequence, 503 residues long: Catalase (503 aa).

A signal peptide spans 1–21 (MHMSKSFLIISMGFVAVSVQA). Active-site residues include histidine 72 and asparagine 145. Tyrosine 353 contacts heme.

This sequence belongs to the catalase family. Requires heme as cofactor.

It is found in the periplasm. The catalysed reaction is 2 H2O2 = O2 + 2 H2O. Decomposes hydrogen peroxide into water and oxygen; serves to protect cells from the toxic effects of hydrogen peroxide. The chain is Catalase from Vibrio cholerae serotype O1 (strain ATCC 39315 / El Tor Inaba N16961).